Consider the following 229-residue polypeptide: Large ribosomal subunit protein uL1 (229 aa).

Belongs to the universal ribosomal protein uL1 family. In terms of assembly, part of the 50S ribosomal subunit.

Its function is as follows. Binds directly to 23S rRNA. The L1 stalk is quite mobile in the ribosome, and is involved in E site tRNA release. Protein L1 is also a translational repressor protein, it controls the translation of the L11 operon by binding to its mRNA. The chain is Large ribosomal subunit protein uL1 from Clostridium botulinum (strain 657 / Type Ba4).